We begin with the raw amino-acid sequence, 283 residues long: Thymidylate synthase (283 aa).

Arginine 33 is a binding site for dUMP. Histidine 63 serves as a coordination point for (6R)-5,10-methylene-5,6,7,8-tetrahydrofolate. 138 to 139 is a dUMP binding site; sequence RR. Cysteine 158 acts as the Nucleophile in catalysis. DUMP contacts are provided by residues 185 to 188, asparagine 196, and 226 to 228; these read RSAD and HIY. Aspartate 188 serves as a coordination point for (6R)-5,10-methylene-5,6,7,8-tetrahydrofolate. Residue alanine 282 participates in (6R)-5,10-methylene-5,6,7,8-tetrahydrofolate binding.

It belongs to the thymidylate synthase family. Bacterial-type ThyA subfamily. In terms of assembly, homodimer.

Its subcellular location is the cytoplasm. The enzyme catalyses dUMP + (6R)-5,10-methylene-5,6,7,8-tetrahydrofolate = 7,8-dihydrofolate + dTMP. It participates in pyrimidine metabolism; dTTP biosynthesis. In terms of biological role, catalyzes the reductive methylation of 2'-deoxyuridine-5'-monophosphate (dUMP) to 2'-deoxythymidine-5'-monophosphate (dTMP) while utilizing 5,10-methylenetetrahydrofolate (mTHF) as the methyl donor and reductant in the reaction, yielding dihydrofolate (DHF) as a by-product. This enzymatic reaction provides an intracellular de novo source of dTMP, an essential precursor for DNA biosynthesis. The polypeptide is Thymidylate synthase (Methylibium petroleiphilum (strain ATCC BAA-1232 / LMG 22953 / PM1)).